A 204-amino-acid chain; its full sequence is Methylthioribulose-1-phosphate dehydratase (204 aa).

Positions 94 and 96 each coordinate Zn(2+).

Belongs to the aldolase class II family. MtnB subfamily. Zn(2+) serves as cofactor.

It catalyses the reaction 5-(methylsulfanyl)-D-ribulose 1-phosphate = 5-methylsulfanyl-2,3-dioxopentyl phosphate + H2O. It participates in amino-acid biosynthesis; L-methionine biosynthesis via salvage pathway; L-methionine from S-methyl-5-thio-alpha-D-ribose 1-phosphate: step 2/6. In terms of biological role, catalyzes the dehydration of methylthioribulose-1-phosphate (MTRu-1-P) into 2,3-diketo-5-methylthiopentyl-1-phosphate (DK-MTP-1-P). In Enterobacter sp. (strain 638), this protein is Methylthioribulose-1-phosphate dehydratase.